A 60-amino-acid chain; its full sequence is Large ribosomal subunit protein bL32 (60 aa).

A compositionally biased stretch (basic residues) spans 1–23 (MAKHPVPKKKTSKSKRDMRRSHH). The tract at residues 1 to 26 (MAKHPVPKKKTSKSKRDMRRSHHALT) is disordered.

It belongs to the bacterial ribosomal protein bL32 family.

This chain is Large ribosomal subunit protein bL32, found in Deinococcus deserti (strain DSM 17065 / CIP 109153 / LMG 22923 / VCD115).